Consider the following 160-residue polypeptide: Protein cornichon homolog 3 (160 aa).

At 1-10 (MAFTFAAFCY) the chain is on the cytoplasmic side. A helical membrane pass occupies residues 11–31 (MLSLVLCAALIFFAIWHIIAF). The Lumenal segment spans residues 32 to 72 (DELRTDFKSPIDQCNPVHARERLRNIERICFLLRKLVLPEY). Residues 73–93 (SIHSLFCIMFLCAQEWLTLGL) form a helical membrane-spanning segment. Residues 94–138 (NVPLLFYHFWRYFHCPADSSELAYDPPVVMNADTLSYCQKEAWCK) lie on the Cytoplasmic side of the membrane. Residues 139–159 (LAFYLLSFFYYLYCMIYTLVS) form a helical membrane-spanning segment. Position 160 (Ser160) is a topological domain, lumenal.

This sequence belongs to the cornichon family. Acts as an auxiliary subunit for AMPA-selective glutamate receptors (AMPARs). Found in a complex with GRIA1, GRIA2, GRIA3, GRIA4, CNIH2, CACNG2, CACNG3, CACNG4, CACNG5, CACNG7 and CACNG8. As to expression, expression is up-regulated in dorsolateral prefrontal cortex of patients with schizophrenia (postmortem brain study).

It localises to the postsynaptic cell membrane. Functionally, regulates the trafficking and gating properties of AMPA-selective glutamate receptors (AMPARs). Promotes their targeting to the cell membrane and synapses and modulates their gating properties by regulating their rates of activation, deactivation and desensitization. This Homo sapiens (Human) protein is Protein cornichon homolog 3 (CNIH3).